A 96-amino-acid chain; its full sequence is Small ribosomal subunit protein bS20 (96 aa).

It belongs to the bacterial ribosomal protein bS20 family.

Its function is as follows. Binds directly to 16S ribosomal RNA. This is Small ribosomal subunit protein bS20 from Anaplasma phagocytophilum (strain HZ).